Consider the following 225-residue polypeptide: MEIEVGEPEAQRLKLPWCREAHWRETLPAMLNELDPGPIELDCRDWQLGCRDLHQLRELLNKEGVTLTRIHANLRETLVSAAALGYPTHMASPQGNSSKTRSSDTQPKPKTPQKLLFHQGTLRSGDHLSAEGDVLLLGDVNPGARISAGGDVMVWGRLRGIAHAGQDGDTKAKIVALQLRPLQLRIADAVARGPEDQPQPGLAEEARLEGDTIMIEPARANRFNG.

Residues Pro-87–Pro-112 are disordered. A compositionally biased stretch (polar residues) spans Ala-91–Lys-108.

The protein belongs to the MinC family. Interacts with MinD and FtsZ.

Functionally, cell division inhibitor that blocks the formation of polar Z ring septums. Rapidly oscillates between the poles of the cell to destabilize FtsZ filaments that have formed before they mature into polar Z rings. Prevents FtsZ polymerization. In Prochlorococcus marinus (strain MIT 9313), this protein is Probable septum site-determining protein MinC.